The primary structure comprises 1479 residues: C-type mannose receptor 2 (1479 aa).

Positions 1–30 are cleaved as a signal peptide; sequence MVPIRPALAPWPRHLLRCVLLLGGLRLGHP. Topologically, residues 31-1413 are extracellular; it reads ADSAAALLEP…SAALPESPVA (1383 aa). A Ricin B-type lectin domain is found at 37 to 190; it reads LLEPDVFLIF…SHGKPCTIPF (154 aa). Residues Cys92 and Cys111 are joined by a disulfide bond. Asn101 and Asn139 each carry an N-linked (GlcNAc...) asparagine glycan. The region spanning 181 to 229 is the Fibronectin type-II domain; the sequence is SHGKPCTIPFKYDNQWFHGCTSTGREDGHLWCATTQDYGKDERWGFCPI. Disulfide bonds link Cys186–Cys212, Cys200–Cys227, Cys265–Cys358, and Cys334–Cys350. Residues 243-359 enclose the C-type lectin 1 domain; that stretch reads LTDSCYQFNF…CSIALPYVCK (117 aa). Asn363 is a glycosylation site (N-linked (GlcNAc...) asparagine). 7 consecutive C-type lectin domains span residues 388–504, 527–643, 677–808, 831–950, 978–1106, 1131–1242, and 1271–1391; these read FQGH…SICK, HSPS…RYIC, KLRH…WICK, FQEA…YICK, FLNK…GFIC, YLNH…GAVC, and FREH…GVVC. 7 cysteine pairs are disulfide-bonded: Cys409–Cys503, Cys480–Cys495, Cys617–Cys634, Cys703–Cys807, Cys784–Cys799, Cys852–Cys949, and Cys926–Cys941. N-linked (GlcNAc...) asparagine glycosylation occurs at Asn1028. A disulfide bridge links Cys1077 with Cys1097. Lys1141 is covalently cross-linked (Glycyl lysine isopeptide (Lys-Gly) (interchain with G-Cter in SUMO1)). The cysteines at positions 1219 and 1233 are disulfide-linked. An N-linked (GlcNAc...) asparagine glycan is attached at Asn1348. Cys1367 and Cys1382 are disulfide-bonded. The chain crosses the membrane as a helical span at residues 1414–1434; the sequence is LVVVLTAVLLLLALMTAALIL. Residues 1435–1479 lie on the Cytoplasmic side of the membrane; sequence YRRRQSAERGSFEGARYSRSSHSGPAEATEKNILVSDMEMNEQQE. A disordered region spans residues 1446–1479; that stretch reads FEGARYSRSSHSGPAEATEKNILVSDMEMNEQQE.

As to quaternary structure, interacts directly with PLAUR/UPAR and PLAU/pro-UPA to form a tri-molecular complex. Interacts with collagen V and with C-terminal region of type I collagen/COL1A1. Phosphorylated. In terms of tissue distribution, highly expressed in heart, lung and kidney, but little or no expression in brain, thymus or adult liver. Expressed at highly endothelialized sites such as those in choroid plexus and kidney glomerulai as well as in chondrocytes in cartilaginous regions of the embryo.

The protein resides in the membrane. May play a role as endocytotic lectin receptor displaying calcium-dependent lectin activity. Internalizes glycosylated ligands from the extracellular space for release in an endosomal compartment via clathrin-mediated endocytosis. May be involved in plasminogen activation system controlling the extracellular level of PLAUR/PLAU, and thus may regulate protease activity at the cell surface. May contribute to cellular uptake, remodeling and degradation of extracellular collagen matrices. May participate in remodeling of extracellular matrix cooperating with the matrix metalloproteinases (MMPs). In Mus musculus (Mouse), this protein is C-type mannose receptor 2 (Mrc2).